The chain runs to 91 residues: DNA-directed RNA polymerase subunit omega (91 aa).

The protein belongs to the RNA polymerase subunit omega family. The RNAP catalytic core consists of 2 alpha, 1 beta, 1 beta' and 1 omega subunit. When a sigma factor is associated with the core the holoenzyme is formed, which can initiate transcription.

The catalysed reaction is RNA(n) + a ribonucleoside 5'-triphosphate = RNA(n+1) + diphosphate. Its function is as follows. Promotes RNA polymerase assembly. Latches the N- and C-terminal regions of the beta' subunit thereby facilitating its interaction with the beta and alpha subunits. The polypeptide is DNA-directed RNA polymerase subunit omega (Syntrophus aciditrophicus (strain SB)).